A 468-amino-acid chain; its full sequence is POC1 centriolar protein homolog B (468 aa).

WD repeat units follow at residues glycine 16–lysine 55, glycine 58–valine 97, alanine 100–serine 139, glutamine 142–threonine 181, aspartate 184–histidine 223, valine 226–threonine 265, and glycine 268–lysine 307. Positions asparagine 420–lysine 459 form a coiled coil.

This sequence belongs to the WD repeat POC1 family. As to quaternary structure, interacts with pat. Highly expressed in ovary and, at low levels, in testis.

The protein localises to the cytoplasm. It is found in the cytoskeleton. It localises to the microtubule organizing center. Its subcellular location is the centrosome. The protein resides in the centriole. In terms of biological role, plays an important role in centriole assembly and/or stability and ciliogenesis. Involved in early steps of centriole duplication, as well as in the later steps of centriole length control. This is POC1 centriolar protein homolog B (poc1b) from Xenopus laevis (African clawed frog).